The following is a 242-amino-acid chain: ATP synthase subunit a (242 aa).

6 helical membrane passes run 29–49 (SAAY…LAFS), 84–104 (FVPV…FGMI), 114–134 (IIIT…VGFV), 140–160 (FLSL…MIII), 189–209 (VIAS…IPLM), and 210–230 (VILI…FTIL).

It belongs to the ATPase A chain family. In terms of assembly, F-type ATPases have 2 components, CF(1) - the catalytic core - and CF(0) - the membrane proton channel. CF(1) has five subunits: alpha(3), beta(3), gamma(1), delta(1), epsilon(1). CF(0) has three main subunits: a(1), b(2) and c(9-12). The alpha and beta chains form an alternating ring which encloses part of the gamma chain. CF(1) is attached to CF(0) by a central stalk formed by the gamma and epsilon chains, while a peripheral stalk is formed by the delta and b chains.

The protein resides in the cell inner membrane. Key component of the proton channel; it plays a direct role in the translocation of protons across the membrane. The polypeptide is ATP synthase subunit a (Rickettsia bellii (strain RML369-C)).